A 71-amino-acid chain; its full sequence is MIIPVRCFTCGKVIGNKWDAYLDLLQLDYTEGDALDALNLVRYCCRRMLMTHVDLIEKLLNYNTLEKSDNS.

Residues Cys-7, Cys-10, Cys-44, and Cys-45 each contribute to the Zn(2+) site.

Belongs to the archaeal Rpo10/eukaryotic RPB10 RNA polymerase subunit family. As to quaternary structure, component of the RNA polymerase I (Pol I), RNA polymerase II (Pol II) and RNA polymerase III (Pol III) complexes consisting of at least 13, 12 and 17 subunits, respectively.

The protein resides in the nucleus. In terms of biological role, DNA-dependent RNA polymerase catalyzes the transcription of DNA into RNA using the four ribonucleoside triphosphates as substrates. Common component of RNA polymerases I, II and III which synthesize ribosomal RNA precursors, mRNA precursors and many functional non-coding RNAs, and a small RNAs, such as 5S rRNA and tRNAs, respectively. Pol II is the central component of the basal RNA polymerase II transcription machinery. Pols are composed of mobile elements that move relative to each other. In Pol II, RBP10 is part of the core element with the central large cleft. The sequence is that of DNA-directed RNA polymerases I, II, and III subunit RPABC5 from Brassica napus (Rape).